The sequence spans 428 residues: Tyrosine--tRNA ligase (428 aa).

Tyrosine 41 provides a ligand contact to L-tyrosine. The 'HIGH' region signature appears at 46-55 (PTADSLHLGH). Residues tyrosine 179 and glutamine 183 each coordinate L-tyrosine. The 'KMSKS' region motif lies at 239–243 (KFGKT). Lysine 242 lines the ATP pocket. An S4 RNA-binding domain is found at 361 to 418 (ADLMQALVDAELQPSRGQARKTIASNAVTINGEKQSDPEYIFNDEDRLFGRYTLLRRG).

Belongs to the class-I aminoacyl-tRNA synthetase family. TyrS type 1 subfamily. In terms of assembly, homodimer.

Its subcellular location is the cytoplasm. The catalysed reaction is tRNA(Tyr) + L-tyrosine + ATP = L-tyrosyl-tRNA(Tyr) + AMP + diphosphate + H(+). Functionally, catalyzes the attachment of tyrosine to tRNA(Tyr) in a two-step reaction: tyrosine is first activated by ATP to form Tyr-AMP and then transferred to the acceptor end of tRNA(Tyr). The polypeptide is Tyrosine--tRNA ligase (Salmonella paratyphi C (strain RKS4594)).